Here is a 48-residue protein sequence, read N- to C-terminus: MDIIGSGFIRFKYNYIIIIIINIIPELMPLKSVNFLIITSLYAWKIPK.

It is found in the mitochondrion. This is an uncharacterized protein from Emericella nidulans (Aspergillus nidulans).